Here is a 156-residue protein sequence, read N- to C-terminus: ATP synthase subunit b (156 aa).

Residues 7–27 (LFAQMVVFLILAWFTMKFVWP) form a helical membrane-spanning segment.

Belongs to the ATPase B chain family. F-type ATPases have 2 components, F(1) - the catalytic core - and F(0) - the membrane proton channel. F(1) has five subunits: alpha(3), beta(3), gamma(1), delta(1), epsilon(1). F(0) has three main subunits: a(1), b(2) and c(10-14). The alpha and beta chains form an alternating ring which encloses part of the gamma chain. F(1) is attached to F(0) by a central stalk formed by the gamma and epsilon chains, while a peripheral stalk is formed by the delta and b chains.

It is found in the cell inner membrane. Functionally, f(1)F(0) ATP synthase produces ATP from ADP in the presence of a proton or sodium gradient. F-type ATPases consist of two structural domains, F(1) containing the extramembraneous catalytic core and F(0) containing the membrane proton channel, linked together by a central stalk and a peripheral stalk. During catalysis, ATP synthesis in the catalytic domain of F(1) is coupled via a rotary mechanism of the central stalk subunits to proton translocation. Component of the F(0) channel, it forms part of the peripheral stalk, linking F(1) to F(0). In Paraburkholderia phymatum (strain DSM 17167 / CIP 108236 / LMG 21445 / STM815) (Burkholderia phymatum), this protein is ATP synthase subunit b.